We begin with the raw amino-acid sequence, 86 residues long: MSIDTQSIIENNKRSAHDTGSPEVQVALLTARIELLTKHFKIHKKDHHSRRGLLQMVNRRRSLLDYLNKKENERYKLLIEKLGLRR.

A compositionally biased stretch (polar residues) spans 1–10; the sequence is MSIDTQSIIE. Residues 1 to 21 form a disordered region; it reads MSIDTQSIIENNKRSAHDTGS.

It belongs to the universal ribosomal protein uS15 family. Part of the 30S ribosomal subunit. Forms a bridge to the 50S subunit in the 70S ribosome, contacting the 23S rRNA.

One of the primary rRNA binding proteins, it binds directly to 16S rRNA where it helps nucleate assembly of the platform of the 30S subunit by binding and bridging several RNA helices of the 16S rRNA. In terms of biological role, forms an intersubunit bridge (bridge B4) with the 23S rRNA of the 50S subunit in the ribosome. The sequence is that of Small ribosomal subunit protein uS15 from Xylella fastidiosa (strain M23).